The chain runs to 278 residues: ATP-dependent dethiobiotin synthetase BioD 1 (278 aa).

Position 51–56 (51–56 (NVGKTI)) interacts with ATP. Residue T55 coordinates Mg(2+). Residue K76 is part of the active site. D102 contacts ATP. 2 residues coordinate Mg(2+): D102 and E163. Residues 223–224 (NR) and 252–254 (PYI) contribute to the ATP site.

The protein belongs to the dethiobiotin synthetase family. In terms of assembly, homodimer. Mg(2+) serves as cofactor.

It localises to the cytoplasm. The enzyme catalyses (7R,8S)-7,8-diammoniononanoate + CO2 + ATP = (4R,5S)-dethiobiotin + ADP + phosphate + 3 H(+). It functions in the pathway cofactor biosynthesis; biotin biosynthesis; biotin from 7,8-diaminononanoate: step 1/2. Functionally, catalyzes a mechanistically unusual reaction, the ATP-dependent insertion of CO2 between the N7 and N8 nitrogen atoms of 7,8-diaminopelargonic acid (DAPA, also called 7,8-diammoniononanoate) to form a ureido ring. In Haemophilus ducreyi (strain 35000HP / ATCC 700724), this protein is ATP-dependent dethiobiotin synthetase BioD 1.